The chain runs to 41 residues: Large ribosomal subunit protein bL36 (41 aa).

It belongs to the bacterial ribosomal protein bL36 family.

In Neisseria gonorrhoeae (strain ATCC 700825 / FA 1090), this protein is Large ribosomal subunit protein bL36.